The chain runs to 471 residues: Monocarboxylate transporter 11 (471 aa).

The segment covering 1 to 13 (MPAPQRKHRRGGF) has biased composition (basic residues). Positions 1-31 (MPAPQRKHRRGGFSHRCFPTPQTAMTPQPAG) are disordered. Over 1-35 (MPAPQRKHRRGGFSHRCFPTPQTAMTPQPAGPPDG) the chain is Cytoplasmic. The segment covering 19-28 (PTPQTAMTPQ) has biased composition (low complexity). A run of 12 helical transmembrane segments spans residues 36–56 (GWGW…YGLL), 78–98 (AWIS…GSAL), 106–126 (PVVM…AFAS), 131–151 (LYLG…APAL), 163–183 (VLAV…LAPA), 198–218 (LLLG…LPLV), 243–263 (AFSI…VPYV), 273–293 (GLGG…DAGA), 312–332 (LAVF…VPVV), 333–353 (GGEE…GLSA), 367–389 (LVGV…LGGL), and 407–427 (ASFL…IGLP). The Cytoplasmic segment spans residues 428–471 (RALPSCGPASPPATPPPETGELLPAPQAVLLSPGGPGSTLDTTC).

It belongs to the major facilitator superfamily. Monocarboxylate porter (TC 2.A.1.13) family. As to quaternary structure, interacts with isoform 2 of BSG. Expressed in liver, salivary gland and thyroid.

The protein localises to the endoplasmic reticulum membrane. The protein resides in the cell membrane. It catalyses the reaction pyruvate(out) + H(+)(out) = pyruvate(in) + H(+)(in). Its function is as follows. Proton-linked monocarboxylate transporter. It catalyzes the transport of pyruvate across the plasma membrane. Probably involved in hepatic lipid metabolism: overexpression results in an increase of triacylglycerol(TAG) levels, small increases in intracellular diacylglycerols and decreases in lysophosphatidylcholine, cholesterol ester and sphingomyelin lipids. The polypeptide is Monocarboxylate transporter 11 (SLC16A11) (Homo sapiens (Human)).